The chain runs to 337 residues: Glutaredoxin-3 (337 aa).

Position 2 is an N-acetylalanine (alanine 2). The 118-residue stretch at 2-119 (AAGAAEAGEA…LTKKVQRHVS (118 aa)) folds into the Thioredoxin domain. Position 119 is a phosphoserine (serine 119). Glutaredoxin domains lie at 144 to 238 (HAAP…PKLE) and 239 to 337 (ERLK…KGEN). [2Fe-2S] cluster contacts are provided by cysteine 161 and cysteine 263.

Homodimer; the homodimer is independent of 2Fe-2S clusters. Heterotrimer; forms a heterotrimeric complex composed by two BOLA2 molecules and one GLRX3 molecule; linked by [2Fe-2S] clusters. Interacts (via N-terminus) with PRKCQ/PKC-theta. Interacts (via C-terminus) with CSRP3. Interacts with CSRP2.

The protein localises to the cytoplasm. Its subcellular location is the cytosol. The protein resides in the cell cortex. It is found in the myofibril. It localises to the sarcomere. The protein localises to the z line. Functionally, together with BOLA2, acts as a cytosolic iron-sulfur (Fe-S) cluster assembly factor that facilitates [2Fe-2S] cluster insertion into a subset of cytosolic proteins. Acts as a critical negative regulator of cardiac hypertrophy and a positive inotropic regulator. Required for hemoglobin maturation. Does not possess any thyoredoxin activity since it lacks the conserved motif that is essential for catalytic activity. The protein is Glutaredoxin-3 (Glrx3) of Mus musculus (Mouse).